Reading from the N-terminus, the 204-residue chain is LexA repressor (204 aa).

Residues 28–48 (VREIGQAVGLASSSTVHGHLS) constitute a DNA-binding region (H-T-H motif). Residues Ser-126 and Lys-164 each act as for autocatalytic cleavage activity in the active site.

It belongs to the peptidase S24 family. As to quaternary structure, homodimer.

The enzyme catalyses Hydrolysis of Ala-|-Gly bond in repressor LexA.. Represses a number of genes involved in the response to DNA damage (SOS response), including recA and lexA. In the presence of single-stranded DNA, RecA interacts with LexA causing an autocatalytic cleavage which disrupts the DNA-binding part of LexA, leading to derepression of the SOS regulon and eventually DNA repair. The protein is LexA repressor of Bacillus mycoides (strain KBAB4) (Bacillus weihenstephanensis).